Consider the following 374-residue polypeptide: Muconate cycloisomerase 1 (374 aa).

Belongs to the cycloisomerase 2 family. Homotetramer.

It carries out the reaction (S)-muconolactone = cis,cis-muconate + H(+). The protein operates within aromatic compound metabolism; beta-ketoadipate pathway; 5-oxo-4,5-dihydro-2-furylacetate from catechol: step 2/3. In terms of biological role, catalyzes a syn cycloisomerization. This Cutaneotrichosporon cutaneum (Yeast) protein is Muconate cycloisomerase 1.